We begin with the raw amino-acid sequence, 419 residues long: MNKFWIMLSHTYKNKIMAKSFIISTVITVLLVLVVTNLESIISLFQGDDAKEKIAVVDETNELYPVFSKQLKAVDTDGDLDVKLSKQSEDEVTKQVKDESLDGMLIIKRDEKGTISGTYKALTISDESTYQTLQQALTQTKTAVGTAELGVSQETISSLYAPVTVGQKALKEGAKSEEELGQTVGLVYIMLFVIYFSVIMYASMIAMEVATEKSSRVMEILISSMPPIQQMFAKLLGIGLVGITQLAIIIGAGSLSLKLNQKSETASSVGGFLNLTDVSATTVIYAVIFFLLGYFLYATLAAFLGSVVSRIEDVQQTITPMTLLVVAGFMIAMFGLNAPDAGFITVTSFIPFFTPMIMFLRVGMLDIPFWQAAVGIGITLLTIVILAVIGARIYKGGVLIYGNSSAFKAIKQALRLAKN.

7 helical membrane-spanning segments follow: residues 16 to 36 (IMAK…LVVT), 186 to 206 (LVYI…SMIA), 235 to 255 (LLGI…AGSL), 283 to 303 (VIYA…LAAF), 318 to 338 (ITPM…GLNA), 340 to 360 (DAGF…IMFL), and 369 to 389 (FWQA…LAVI).

The protein to M.jannaschii MJ1024.

Its subcellular location is the cell membrane. This is an uncharacterized protein from Bacillus subtilis (strain 168).